A 29-amino-acid chain; its full sequence is Cytochrome c oxidase subunit 7A1, mitochondrial (29 aa).

Residues L1–Q13 show a composition bias toward basic and acidic residues. Residues L1–N29 are disordered.

It belongs to the cytochrome c oxidase VIIa family. As to quaternary structure, component of the complex IV (CIV, cytochrome c oxidase), a multisubunit enzyme composed of 14 subunits. The complex is composed of a catalytic core of 3 subunits MT-CO1, MT-CO2 and MT-CO3, encoded in the mitochondrial DNA, and 11 supernumerary subunits COX4I1 (or COX4I2), COX5A, COX5B, COX6A2 (or COX6A1), COX6B1 (or COX6B2), COX6C, COX7A1 (or COX7A2), COX7B, COX7C, COX8B and NDUFA4, which are encoded in the nuclear genome. The complex exists as a monomer or a dimer and forms supercomplexes (SCs) in the inner mitochondrial membrane with NADH-ubiquinone oxidoreductase (complex I, CI) and ubiquinol-cytochrome c oxidoreductase (cytochrome b-c1 complex, complex III, CIII), resulting in different assemblies (supercomplex SCI(1)III(2)IV(1) and megacomplex MCI(2)III(2)IV(2)).

Its subcellular location is the mitochondrion inner membrane. The protein operates within energy metabolism; oxidative phosphorylation. In terms of biological role, component of the mitochondrial respiratory complex IV (CIV, also named cytochrome c oxidase complex), the last enzyme in the mitochondrial electron transport chain which drives oxidative phosphorylation. The CIV complex is the component of the respiratory chain that catalyzes the reduction of oxygen to water. Acts as an assembly factor that specifically drives the homodimerization of CIV complexes, mediating the formation of mitochondrial respiratory supercomplexes (respirasomes) containing two CIV: supercomplxes with two molecules of CIV show improved activity. Despite being highly expressed in brown adipose tissue, not required for thermogenesis. This is Cytochrome c oxidase subunit 7A1, mitochondrial (COX7A1) from Ovis aries (Sheep).